Reading from the N-terminus, the 166-residue chain is Lutropin subunit beta (166 aa).

An N-terminal signal peptide occupies residues 1–21 (MGGAQVLLLLTLLGTPLVTHG). Cystine bridges form between Cys-56–Cys-104, Cys-70–Cys-119, Cys-73–Cys-157, Cys-81–Cys-135, Cys-85–Cys-137, and Cys-140–Cys-147. N-linked (GlcNAc...) asparagine glycosylation is present at Asn-60.

The protein belongs to the glycoprotein hormones subunit beta family. Heterodimer of a common alpha chain and a unique beta chain which confers biological specificity to thyrotropin, lutropin, follitropin and gonadotropin.

It is found in the secreted. Promotes spermatogenesis and ovulation by stimulating the testes and ovaries to synthesize steroids. The polypeptide is Lutropin subunit beta (LHB) (Coturnix japonica (Japanese quail)).